A 434-amino-acid chain; its full sequence is Alpha-enolase (434 aa).

Serine 40 is a binding site for Mg(2+). Substrate contacts are provided by histidine 158 and glutamate 167. Glutamate 210 acts as the Proton donor in catalysis. Aspartate 245, glutamate 293, and aspartate 318 together coordinate Mg(2+). Substrate contacts are provided by glutamate 293 and aspartate 318. The active-site Proton acceptor is the lysine 343. Residues serine 370–serine 373 and lysine 394 contribute to the substrate site.

The protein belongs to the enolase family. As to quaternary structure, homodimer. It depends on Mg(2+) as a cofactor.

It localises to the cytoplasm. It catalyses the reaction (2R)-2-phosphoglycerate = phosphoenolpyruvate + H2O. It functions in the pathway carbohydrate degradation; glycolysis; pyruvate from D-glyceraldehyde 3-phosphate: step 4/5. This chain is Alpha-enolase, found in Python regius (Ball python).